Here is a 172-residue protein sequence, read N- to C-terminus: Large ribosomal subunit protein bL9 (172 aa).

The protein belongs to the bacterial ribosomal protein bL9 family.

Binds to the 23S rRNA. The protein is Large ribosomal subunit protein bL9 of Chlamydia abortus (strain DSM 27085 / S26/3) (Chlamydophila abortus).